Here is a 322-residue protein sequence, read N- to C-terminus: Porphobilinogen deaminase (322 aa).

An S-(dipyrrolylmethanemethyl)cysteine modification is found at Cys254.

It belongs to the HMBS family. As to quaternary structure, monomer. Dipyrromethane is required as a cofactor.

The catalysed reaction is 4 porphobilinogen + H2O = hydroxymethylbilane + 4 NH4(+). It functions in the pathway porphyrin-containing compound metabolism; protoporphyrin-IX biosynthesis; coproporphyrinogen-III from 5-aminolevulinate: step 2/4. In terms of biological role, tetrapolymerization of the monopyrrole PBG into the hydroxymethylbilane pre-uroporphyrinogen in several discrete steps. The protein is Porphobilinogen deaminase of Methylococcus capsulatus (strain ATCC 33009 / NCIMB 11132 / Bath).